The following is a 645-amino-acid chain: ATP-dependent zinc metalloprotease FtsH (645 aa).

Topologically, residues 1-6 (MDQRPK) are cytoplasmic. A helical membrane pass occupies residues 7–27 (FGMILFYIVLGVFLMVALRGL). Residues 28-110 (YTTDTNLSVP…VVYEKGNDSL (83 aa)) are Periplasmic-facing. A helical membrane pass occupies residues 111–131 (FWVNLLGTIIPLAIIVFIWFF). Residues 132-645 (AMRSLSGRNS…AKEGNEDEKN (514 aa)) are Cytoplasmic-facing. An ATP-binding site is contributed by 204–211 (GPPGTGKT). H426 provides a ligand contact to Zn(2+). E427 is an active-site residue. Positions 430 and 503 each coordinate Zn(2+). The segment at 623–645 (SKRKVSAVSTNEEAKEGNEDEKN) is disordered. Residues 634-645 (EEAKEGNEDEKN) are compositionally biased toward basic and acidic residues.

The protein in the central section; belongs to the AAA ATPase family. This sequence in the C-terminal section; belongs to the peptidase M41 family. Homohexamer. Requires Zn(2+) as cofactor.

The protein localises to the cell inner membrane. Acts as a processive, ATP-dependent zinc metallopeptidase for both cytoplasmic and membrane proteins. Plays a role in the quality control of integral membrane proteins. In Kosmotoga olearia (strain ATCC BAA-1733 / DSM 21960 / TBF 19.5.1), this protein is ATP-dependent zinc metalloprotease FtsH.